A 376-amino-acid polypeptide reads, in one-letter code: Flagellin B (376 aa).

Residues serine 103–threonine 130 are a coiled coil.

It belongs to the bacterial flagellin family. As to quaternary structure, heteromer of multiple flagellin subunits including FlaA, FlaB, FlaC, FlaD and possibly FlaE.

It is found in the secreted. The protein resides in the bacterial flagellum. In terms of biological role, flagellin is the subunit protein which polymerizes to form the filaments of bacterial flagella. FlaB is not essential for flagellar synthesis and motility. This is Flagellin B (flaB) from Vibrio anguillarum (Listonella anguillarum).